An 88-amino-acid polypeptide reads, in one-letter code: Small ribosomal subunit protein bS20 (88 aa).

The segment at 1–27 (MANSKSAKKRALQSEKRRQHNASRRSM) is disordered.

Belongs to the bacterial ribosomal protein bS20 family.

Functionally, binds directly to 16S ribosomal RNA. The protein is Small ribosomal subunit protein bS20 of Shewanella sp. (strain ANA-3).